The chain runs to 900 residues: Exosome complex component 10 homolog (900 aa).

Disordered regions lie at residues 1–31 (MPRT…SEDV) and 147–174 (TSIE…TGTP). Residues 8–28 (VHQEAKEESAQADQPPKKSAS) show a composition bias toward basic and acidic residues. The region spanning 273-438 (VVDTVEKLKQ…YVYGRMTNDL (166 aa)) is the 3'-5' exonuclease domain. The Mg(2+) site is built by Asp296, Glu298, Asp354, and Asp423. The 81-residue stretch at 485 to 565 (DNRQLYALRG…LKARDQPLVK (81 aa)) folds into the HRDC domain. The disordered stretch occupies residues 731 to 900 (EQLKRKHPQA…FSNVRKEGKK (170 aa)). The segment covering 809–826 (RKQKKNQFQRGFKAKNRG) has biased composition (basic residues). A compositionally biased stretch (low complexity) spans 878 to 887 (NNRNNKQFNK).

The protein belongs to the exosome component 10/RRP6 family. In terms of assembly, component of the RNA exosome complex. Interacts with spn-A/Rad51; the interaction is required for the recruitment of spn-A to the DNA-damage response foci. Interacts with Su(var)3-9, a heterochromatin factor; the interaction promotes association of Rrp6 with a subset of genomic loci. Interacts with Su(var)205, a heterochromatin factor. Interacts with HDAC1, a heterochromatin factor. Requires Mg(2+) as cofactor. In terms of tissue distribution, salivary gland (at protein level).

The protein resides in the nucleus. It localises to the chromosome. Its subcellular location is the cytoplasm. It is found in the cell cortex. The protein localises to the cytoskeleton. The protein resides in the microtubule organizing center. It localises to the centrosome. Its subcellular location is the spindle. It is found in the midbody. Catalytic component of the RNA exosome complex which has 3'-&gt;5' exoribonuclease activity and participates in a multitude of cellular RNA processing and degradation events. Degrades a large variety of non-coding RNAs that are processed by the exosome, such as pre-rRNAs and some small nucleolar RNAs (snoRNAs). Degrades transcripts derived from different types of heterochromatic repeats, such as subtelomeric minisatellites and simple gagaa repeats. Degrades transcripts derived from transposons and transposon fragments. Degrades chromatin-associated transcripts and contributes to the compaction of heterochromatin. Required for the efficient repair of DNA double-strand breaks via homologous recombination after irradiation. Required for cell proliferation and error-free mitosis. The protein is Exosome complex component 10 homolog of Drosophila melanogaster (Fruit fly).